Here is a 245-residue protein sequence, read N- to C-terminus: Anti-Pycsar protein Apyc1 (245 aa).

Residues 19-219 (FNNNALLYAG…EIQSQILLKH (201 aa)) are beta-lactamase-like. Zn(2+)-binding residues include histidine 61, histidine 63, aspartate 65, histidine 66, histidine 145, aspartate 165, and histidine 219.

The protein belongs to the anti-Pycsar protein Apyc1 family. Homodimer. Zn(2+) is required as a cofactor.

It catalyses the reaction 3',5'-cyclic CMP + H2O = CMP + H(+). The enzyme catalyses 3',5'-cyclic UMP + H2O = UMP + H(+). In terms of biological role, counteracts the endogenous Pycsar antiviral defense system. Phosphodiesterase that enables metal-dependent hydrolysis of host cyclic nucleotide Pycsar defense signals such as cCMP and cUMP. The protein is Anti-Pycsar protein Apyc1 of Paenibacillus sp. (strain J14).